Reading from the N-terminus, the 130-residue chain is uncharacterized protein (130 aa).

Residues 1-23 (MINRKVVYALSALLLFVYSYAFI) form the signal peptide.

This is an uncharacterized protein from Aquifex aeolicus (strain VF5).